Consider the following 338-residue polypeptide: D-erythrose-4-phosphate dehydrogenase (338 aa).

11 to 12 (RI) serves as a coordination point for NAD(+). Substrate-binding positions include 153–155 (SCT), arginine 199, 212–213 (TK), and arginine 235. The active-site Nucleophile is cysteine 154. Asparagine 317 provides a ligand contact to NAD(+).

Belongs to the glyceraldehyde-3-phosphate dehydrogenase family. Epd subfamily. Homotetramer.

It localises to the cytoplasm. The enzyme catalyses D-erythrose 4-phosphate + NAD(+) + H2O = 4-phospho-D-erythronate + NADH + 2 H(+). It participates in cofactor biosynthesis; pyridoxine 5'-phosphate biosynthesis; pyridoxine 5'-phosphate from D-erythrose 4-phosphate: step 1/5. In terms of biological role, catalyzes the NAD-dependent conversion of D-erythrose 4-phosphate to 4-phosphoerythronate. The protein is D-erythrose-4-phosphate dehydrogenase of Shewanella loihica (strain ATCC BAA-1088 / PV-4).